We begin with the raw amino-acid sequence, 143 residues long: Small ribosomal subunit protein eS19B (143 aa).

Belongs to the eukaryotic ribosomal protein eS19 family. As to quaternary structure, component of the small ribosomal subunit (SSU). Mature yeast ribosomes consist of a small (40S) and a large (60S) subunit. The 40S small subunit contains 1 molecule of ribosomal RNA (18S rRNA) and at least 33 different proteins. The large 60S subunit contains 3 rRNA molecules (25S, 5.8S and 5S rRNA) and at least 46 different proteins.

It is found in the cytoplasm. The protein localises to the nucleus. Its function is as follows. Component of the ribosome, a large ribonucleoprotein complex responsible for the synthesis of proteins in the cell. The small ribosomal subunit (SSU) binds messenger RNAs (mRNAs) and translates the encoded message by selecting cognate aminoacyl-transfer RNA (tRNA) molecules. The large subunit (LSU) contains the ribosomal catalytic site termed the peptidyl transferase center (PTC), which catalyzes the formation of peptide bonds, thereby polymerizing the amino acids delivered by tRNAs into a polypeptide chain. The nascent polypeptides leave the ribosome through a tunnel in the LSU and interact with protein factors that function in enzymatic processing, targeting, and the membrane insertion of nascent chains at the exit of the ribosomal tunnel. eS19 is required for proper maturation of the small (40S) ribosomal subunit. Binds to 40S pre-ribosomal particles, probably required after association of NOC4 but before association of ENP1, TSR1 and RIO2 with 20/21S pre-rRNA. The chain is Small ribosomal subunit protein eS19B (rps1902) from Schizosaccharomyces pombe (strain 972 / ATCC 24843) (Fission yeast).